The following is a 411-amino-acid chain: Acetylornithine aminotransferase (411 aa).

Pyridoxal 5'-phosphate is bound by residues 107–108 and F141; that span reads GT. R144 is a binding site for N(2)-acetyl-L-ornithine. 227–230 contacts pyridoxal 5'-phosphate; that stretch reads DEIQ. K256 bears the N6-(pyridoxal phosphate)lysine mark. T284 serves as a coordination point for N(2)-acetyl-L-ornithine. T285 is a binding site for pyridoxal 5'-phosphate.

The protein belongs to the class-III pyridoxal-phosphate-dependent aminotransferase family. ArgD subfamily. In terms of assembly, homodimer. Pyridoxal 5'-phosphate is required as a cofactor.

Its subcellular location is the cytoplasm. The enzyme catalyses N(2)-acetyl-L-ornithine + 2-oxoglutarate = N-acetyl-L-glutamate 5-semialdehyde + L-glutamate. Its pathway is amino-acid biosynthesis; L-arginine biosynthesis; N(2)-acetyl-L-ornithine from L-glutamate: step 4/4. The protein is Acetylornithine aminotransferase of Xylella fastidiosa (strain Temecula1 / ATCC 700964).